Consider the following 28-residue polypeptide: Dermaseptin-2.2TR (28 aa).

In terms of tissue distribution, expressed by the skin glands.

The protein localises to the secreted. Has antimicrobial activity. The protein is Dermaseptin-2.2TR of Phyllomedusa trinitatis (Trinidad leaf frog).